The primary structure comprises 126 residues: Holo-[acyl-carrier-protein] synthase (126 aa).

Mg(2+) contacts are provided by aspartate 9 and glutamate 58.

This sequence belongs to the P-Pant transferase superfamily. AcpS family. The cofactor is Mg(2+).

It is found in the cytoplasm. The enzyme catalyses apo-[ACP] + CoA = holo-[ACP] + adenosine 3',5'-bisphosphate + H(+). Its function is as follows. Transfers the 4'-phosphopantetheine moiety from coenzyme A to a Ser of acyl-carrier-protein. This is Holo-[acyl-carrier-protein] synthase from Vibrio vulnificus (strain YJ016).